The sequence spans 206 residues: Inner membrane-spanning protein YciB (206 aa).

A run of 5 helical transmembrane segments spans residues isoleucine 22–phenylalanine 42, methionine 50–aspartate 70, tryptophan 76–glycine 96, isoleucine 118–phenylalanine 138, and phenylalanine 148–isoleucine 168. Over residues leucine 178–glutamate 189 the composition is skewed to basic and acidic residues. The disordered stretch occupies residues leucine 178–lysine 206. The span at glutamine 191–lysine 206 shows a compositional bias: polar residues.

The protein belongs to the YciB family.

It is found in the cell inner membrane. In terms of biological role, plays a role in cell envelope biogenesis, maintenance of cell envelope integrity and membrane homeostasis. In Vibrio atlanticus (strain LGP32) (Vibrio splendidus (strain Mel32)), this protein is Inner membrane-spanning protein YciB.